A 989-amino-acid chain; its full sequence is Phosphoenolpyruvate carboxylase (989 aa).

Active-site residues include histidine 175 and lysine 630.

The protein belongs to the PEPCase type 1 family. Mg(2+) is required as a cofactor.

The catalysed reaction is oxaloacetate + phosphate = phosphoenolpyruvate + hydrogencarbonate. Its function is as follows. Forms oxaloacetate, a four-carbon dicarboxylic acid source for the tricarboxylic acid cycle. The protein is Phosphoenolpyruvate carboxylase of Prochlorococcus marinus (strain AS9601).